Reading from the N-terminus, the 95-residue chain is uncharacterized protein (95 aa).

This is an uncharacterized protein from Homo sapiens (Human).